A 644-amino-acid chain; its full sequence is 1-deoxy-D-xylulose-5-phosphate synthase (644 aa).

Thiamine diphosphate contacts are provided by residues His72 and 113 to 115; that span reads GHA. Asp144 serves as a coordination point for Mg(2+). Thiamine diphosphate contacts are provided by residues 145–146, Asn174, Tyr287, and Glu370; that span reads GA. Asn174 is a binding site for Mg(2+).

It belongs to the transketolase family. DXPS subfamily. As to quaternary structure, homodimer. It depends on Mg(2+) as a cofactor. Thiamine diphosphate serves as cofactor.

The catalysed reaction is D-glyceraldehyde 3-phosphate + pyruvate + H(+) = 1-deoxy-D-xylulose 5-phosphate + CO2. It functions in the pathway metabolic intermediate biosynthesis; 1-deoxy-D-xylulose 5-phosphate biosynthesis; 1-deoxy-D-xylulose 5-phosphate from D-glyceraldehyde 3-phosphate and pyruvate: step 1/1. In terms of biological role, catalyzes the acyloin condensation reaction between C atoms 2 and 3 of pyruvate and glyceraldehyde 3-phosphate to yield 1-deoxy-D-xylulose-5-phosphate (DXP). This Prochlorococcus marinus (strain MIT 9303) protein is 1-deoxy-D-xylulose-5-phosphate synthase.